The primary structure comprises 214 residues: Large ribosomal subunit protein uL3 (214 aa).

Positions 131–153 (KSQRASHGNSRSHNVPGSIGMAQ) are disordered. Polar residues predominate over residues 132–145 (SQRASHGNSRSHNV). Q153 is subject to N5-methylglutamine.

This sequence belongs to the universal ribosomal protein uL3 family. As to quaternary structure, part of the 50S ribosomal subunit. Forms a cluster with proteins L14 and L19. Methylated by PrmB.

In terms of biological role, one of the primary rRNA binding proteins, it binds directly near the 3'-end of the 23S rRNA, where it nucleates assembly of the 50S subunit. The sequence is that of Large ribosomal subunit protein uL3 from Thiobacillus denitrificans (strain ATCC 25259 / T1).